Consider the following 196-residue polypeptide: MNAMEFFQRSAGKWRSQRTTHHLAFRQAEIGHSDIEVINLDAKDPKILEICKMHEIDPSLAAGGAFVTWDGSMAWDKDDENHKGSTVFAIVPDSENPRSGRMLRERGYAEIIPVVGRFEMDDEDGLNLITEYETMSSIERFWFTSPNLRMRSSAVKRFGGFNTSTFCTEVRLVESNSDSQTETPHVDLEYYSAFGW.

This sequence belongs to the CpcS/CpeS biliprotein lyase family.

In terms of biological role, covalently attaches a chromophore to Cys residue(s) of phycobiliproteins. This chain is Chromophore lyase CpcS/CpeS 2, found in Trichodesmium erythraeum (strain IMS101).